The sequence spans 207 residues: Recombination protein RecR (207 aa).

The C4-type zinc finger occupies Cys60 to Cys75. Positions Ser83–Ala178 constitute a Toprim domain.

It belongs to the RecR family.

May play a role in DNA repair. It seems to be involved in an RecBC-independent recombinational process of DNA repair. It may act with RecF and RecO. This is Recombination protein RecR from Porphyromonas gingivalis (strain ATCC BAA-308 / W83).